Reading from the N-terminus, the 66-residue chain is Large ribosomal subunit protein bL31 (66 aa).

C16, C18, C36, and C39 together coordinate Zn(2+).

It belongs to the bacterial ribosomal protein bL31 family. Type A subfamily. Part of the 50S ribosomal subunit. It depends on Zn(2+) as a cofactor.

Functionally, binds the 23S rRNA. This is Large ribosomal subunit protein bL31 from Nitratiruptor sp. (strain SB155-2).